Here is a 593-residue protein sequence, read N- to C-terminus: A-type ATP synthase subunit A (593 aa).

An ATP-binding site is contributed by 236–243; the sequence is GPFGSGKT.

It belongs to the ATPase alpha/beta chains family. In terms of assembly, has multiple subunits with at least A(3), B(3), C, D, E, F, H, I and proteolipid K(x).

The protein localises to the cell membrane. It catalyses the reaction ATP + H2O + 4 H(+)(in) = ADP + phosphate + 5 H(+)(out). In terms of biological role, produces ATP from ADP in the presence of a proton gradient across the membrane. The archaeal alpha chain is a catalytic subunit. Component of the A-type ATP synthase that produces ATP from ADP in the presence of a proton gradient across the membrane. The A chain is the catalytic subunit. This chain is A-type ATP synthase subunit A, found in Pyrobaculum aerophilum (strain ATCC 51768 / DSM 7523 / JCM 9630 / CIP 104966 / NBRC 100827 / IM2).